The following is a 152-amino-acid chain: Dynein light chain Tctex-type protein 2B (152 aa).

It belongs to the dynein light chain Tctex-type family. Light chain of the cytoplasmic dynein complex 2, a multisubunit complex composed at least of eleven different proteins. The cytoplasmic dynein 2 complex consists of two catalytic heavy chains (HCs) and a number of non-catalytic subunits presented by intermediate chains (ICs), light intermediate chains (LICs) and light chains (LCs). Among them, a heavy chain (DYNC2H1), two intermediate chains (DYNC2I2 and DYNC2I1), a light intermediate chain (DYNC2LI1), and a light chain (DYNLT2B) are unique to the dynein-2 complex, but a subset of the light chains are also shared by dynein-1 and dynein-2 complexes. The dimer DYNLT2B-DYNLT1/DYNLT3 interacts with DYNC2I1; this interaction is crucial for retrograde trafficking of ciliary proteins.

It localises to the dynein axonemal particle. Functionally, acts as one of several non-catalytic accessory components of the cytoplasmic dynein 2 complex (dynein-2 complex), a motor protein complex that drives the movement of cargos along microtubules within cilia and flagella in concert with the intraflagellar transport (IFT) system. Required for proper retrograde ciliary transport. This is Dynein light chain Tctex-type protein 2B (DYNLT2B) from Bos taurus (Bovine).